Consider the following 601-residue polypeptide: DNA mismatch repair protein MutL (601 aa).

The protein belongs to the DNA mismatch repair MutL/HexB family.

In terms of biological role, this protein is involved in the repair of mismatches in DNA. It is required for dam-dependent methyl-directed DNA mismatch repair. May act as a 'molecular matchmaker', a protein that promotes the formation of a stable complex between two or more DNA-binding proteins in an ATP-dependent manner without itself being part of a final effector complex. This chain is DNA mismatch repair protein MutL, found in Listeria monocytogenes serovar 1/2a (strain ATCC BAA-679 / EGD-e).